A 43-amino-acid polypeptide reads, in one-letter code: Bacteriocin weissellin-A (43 aa).

Cys9 and Cys14 are disulfide-bonded.

The protein localises to the secreted. Its function is as follows. Highly active against Gram-positive bacteria M.flavus strain ATCC 400, M.luteus strain CECT241, C.soprogenes strain NCTC533, L.monocytogenes strain ATCC 19111, L.inocua strain ATCC BAA-680D and S.carnosus strain LMG13564. Less active against B.cereus strain LMG13569, C.thiaminolyticum strain ATCC 15579, E.faecalis strain NCTC8176, L.lactis strain LM0230, L.casei strain ATCC 344, L.lactis strain IL1403, L.jensenii strain ATCC 25258, L.plantarum strain CECT220, L.brevis strain ATCC 8287, L.bulgaricus strain LMG13551, P.acidilactici strain ATCC 25740, P.pentosaceus strain ATCC 33316 and P.pentosaceus strain LMG13560. Weakly active against L.mesenteroides strain ATCC 19254, L.lactis strain ATCC 1454, L.sakei strain CECT906T, L.lactis subsp. cremoris strain MC1363 and L.curvatus strain ATCC 51436. Not active against Gram-negative bacterium S.enteritidis strain ATCC 13076. The mode of action appears to be non-lytic. Inactivated by proteinase K, but insensitive to trypsin, alpha-chymotrypsin, pepsin and papain. In Weissella paramesenteroides (Leuconostoc paramesenteroides), this protein is Bacteriocin weissellin-A.